We begin with the raw amino-acid sequence, 310 residues long: Probable cell division protein WhiA (310 aa).

The segment at residues 277-310 (SLKELAEQVPDGPISKSGVNHRLKKLHEIAENLR) is a DNA-binding region (H-T-H motif).

Belongs to the WhiA family.

In terms of biological role, involved in cell division and chromosome segregation. The polypeptide is Probable cell division protein WhiA (Lactobacillus delbrueckii subsp. bulgaricus (strain ATCC 11842 / DSM 20081 / BCRC 10696 / JCM 1002 / NBRC 13953 / NCIMB 11778 / NCTC 12712 / WDCM 00102 / Lb 14)).